The chain runs to 33 residues: Mu-theraphotoxin-Osp1a (33 aa).

3 disulfides stabilise this stretch: C2-C17, C9-C22, and C16-C29.

Belongs to the neurotoxin 10 (Hwtx-1) family. As to expression, expressed by the venom gland.

It localises to the secreted. Its function is as follows. Voltage-gated sodium channel Nav1.7/SCN9A inhibitor. The chain is Mu-theraphotoxin-Osp1a from Orphnaecus sp. (strain Sibaliw/Philippines) (Tarantula spider).